The following is a 351-amino-acid chain: ADP-glucose phosphorylase (351 aa).

Residues 1–63 (MTSPSHASDR…QNPNPKPSSC (63 aa)) are disordered. 41–44 (RAKR) lines the ADP-alpha-D-glucose pocket. Zn(2+)-binding residues include C63 and C66. Residues 72–74 (ECA) and N94 contribute to the ADP-alpha-D-glucose site. Position 133 (H133) interacts with Zn(2+). ADP-alpha-D-glucose contacts are provided by residues N173 and 179 to 182 (GASM). Position 184 (H184) interacts with Zn(2+). H186 acts as the Tele-AMP-histidine intermediate in catalysis. ADP-alpha-D-glucose is bound at residue Q188. Positions 216, 219, 255, and 310 each coordinate Zn(2+). ADP-alpha-D-glucose is bound by residues G321 and 325-326 (FE).

Belongs to the galactose-1-phosphate uridylyltransferase type 1 family. As to quaternary structure, homodimer. The cofactor is Zn(2+).

It catalyses the reaction alpha-D-glucose 1-phosphate + ADP + H(+) = ADP-alpha-D-glucose + phosphate. Functionally, catalyzes the conversion of ADP-glucose and inorganic phosphate (Pi) into glucose-1-phosphate and ADP. Does not possess galactose-1-phosphate uridylyltransferase activity. The chain is ADP-glucose phosphorylase from Arabidopsis thaliana (Mouse-ear cress).